A 434-amino-acid polypeptide reads, in one-letter code: ATP-dependent protease ATPase subunit HslU (434 aa).

ATP-binding positions include V18, 60 to 65 (GVGKTE), D247, E312, and R384.

Belongs to the ClpX chaperone family. HslU subfamily. As to quaternary structure, a double ring-shaped homohexamer of HslV is capped on each side by a ring-shaped HslU homohexamer. The assembly of the HslU/HslV complex is dependent on binding of ATP.

The protein resides in the cytoplasm. In terms of biological role, ATPase subunit of a proteasome-like degradation complex; this subunit has chaperone activity. The binding of ATP and its subsequent hydrolysis by HslU are essential for unfolding of protein substrates subsequently hydrolyzed by HslV. HslU recognizes the N-terminal part of its protein substrates and unfolds these before they are guided to HslV for hydrolysis. The chain is ATP-dependent protease ATPase subunit HslU from Bradyrhizobium sp. (strain BTAi1 / ATCC BAA-1182).